Reading from the N-terminus, the 764-residue chain is Polyadenylate-binding protein, cytoplasmic and nuclear (764 aa).

The disordered stretch occupies residues 36-56; it reads VPEAQAEGAEAAPTPTAAPHP. 4 RRM domains span residues 60-138, 148-225, 241-318, and 344-462; these read ASLY…WSQR, GNIF…HHIP, TNVY…RAQK, and VNLY…LAQR. Disordered regions lie at residues 375-420 and 587-634; these read VMRD…GDRK and GRGG…PRGN. Composition is skewed to basic and acidic residues over residues 387 to 399 and 408 to 420; these read KDEKDKENKKEGE and GSEKKTEKKGDRK. The span at 587-596 shows a compositional bias: gly residues; it reads GRGGPAGRGP. The segment covering 597-613 has biased composition (low complexity); that stretch reads QGIPAGIPQGLQGGPAV. Residues 657–734 enclose the PABC domain; sequence GSFLQAQLAT…ALAVYDEYLK (78 aa). Residues 735–745 show a composition bias toward polar residues; that stretch reads TQGQQPTQQPA. The interval 735–764 is disordered; it reads TQGQQPTQQPAEANGEQPKAEEQKPEEQKA. Residues 752-764 show a composition bias toward basic and acidic residues; the sequence is PKAEEQKPEEQKA.

This sequence belongs to the polyadenylate-binding protein type-1 family.

It localises to the cytoplasm. Its subcellular location is the nucleus. In terms of biological role, binds the poly(A) tail of mRNA. Appears to be an important mediator of the multiple roles of the poly(A) tail in mRNA biogenesis, stability and translation. In the nucleus, involved in both mRNA cleavage and polyadenylation. Is also required for efficient mRNA export to the cytoplasm. Acts in concert with a poly(A)-specific nuclease (PAN) to affect poly(A) tail shortening, which may occur concomitantly with either nucleocytoplasmic mRNA transport or translational initiation. In the cytoplasm, stimulates translation initiation and regulates mRNA decay through translation termination-coupled poly(A) shortening, probably mediated by PAN. In Neurospora crassa (strain ATCC 24698 / 74-OR23-1A / CBS 708.71 / DSM 1257 / FGSC 987), this protein is Polyadenylate-binding protein, cytoplasmic and nuclear (pabp-1).